Consider the following 358-residue polypeptide: B3 domain-containing transcription factor NGA3 (358 aa).

A compositionally biased stretch (polar residues) spans 1-14 (MDLSLAPTTTTSSD). The disordered stretch occupies residues 1-45 (MDLSLAPTTTTSSDQEQDRDQELTSNIGASSSSGPSGNNNNLPMM). Residues 25–45 (SNIGASSSSGPSGNNNNLPMM) show a composition bias toward low complexity. A DNA-binding region (TF-B3) is located at residues 56–162 (FDKVVTPSDV…KLYIDWRHRP (107 aa)). The tract at residues 310–358 (EIGASSSSSSALRLNLSTDHDDDNDDGDDGDDDQFAKKGKSSLSLNFNP) is disordered. A compositionally biased stretch (acidic residues) spans 329 to 342 (HDDDNDDGDDGDDD).

It is found in the nucleus. Functionally, regulates lateral organ growth. Functionally redundant with NGA1, NGA2 and NGA4. The sequence is that of B3 domain-containing transcription factor NGA3 (NGA3) from Arabidopsis thaliana (Mouse-ear cress).